Reading from the N-terminus, the 431-residue chain is MPPILQRLQQSTKMMSHRKILLLVLGCSTVSLLIHQGSQLSWYPKLFPLSCPPLRESPPRAKHMAVAFLKTHKTAGTTVQNILFRFAERHNLTVALPHPSCEHQFCYPRNFSAHFVHPATRPPHMLASHLRFDRAELERLMPPDTIYVTILREPAAMFESLFSYYNQYCPAFRRVPNASLETFLRAPEAYYRPGEHFAMFAHNTLAYDLGGDNERSPRDDAAYLAGLIRQVEEVFSLVMIAEYFDESLVLLRRLLAWDLDDVLYAKLNARAASSRLATIPEALARAARTWNALDAGLYDHFNATFWRRVARAGRACVEREARELREARQRLLRRCFGDEPVLRPAAQIRTKQLQPWQPSRKVDIMGYDLPSGGAGPTTEACLKLAMPEVQYSNYLLRKQKRRGGVRSRPESVLDNPPPRPIRALPRIPQGT.

At 1–19 (MPPILQRLQQSTKMMSHRK) the chain is on the cytoplasmic side. The helical; Signal-anchor for type II membrane protein transmembrane segment at 20–40 (ILLLVLGCSTVSLLIHQGSQL) threads the bilayer. Topologically, residues 41-431 (SWYPKLFPLS…RALPRIPQGT (391 aa)) are lumenal. 4 N-linked (GlcNAc...) asparagine glycosylation sites follow: N91, N110, N177, and N302. The disordered stretch occupies residues 400–431 (KRRGGVRSRPESVLDNPPPRPIRALPRIPQGT). Residues 421 to 431 (IRALPRIPQGT) show a composition bias toward low complexity.

The protein belongs to the galactose-3-O-sulfotransferase family. It depends on Mg(2+) as a cofactor.

The protein localises to the golgi apparatus. Its subcellular location is the golgi stack membrane. The protein operates within protein modification; carbohydrate sulfation. Its function is as follows. Transfers a sulfate to position 3 of non-reducing beta-galactosyl residues in N-glycans and core2-branched O-glycans. Has high activity towards Gal-beta-1,4-GlcNAc, Gal-beta-1,4(Fuc-alpha-1,3)GlcNAc and lower activity towards Gal-beta-1,3(Fuc-alpha-1,4)GlcNAc. The sequence is that of Galactose-3-O-sulfotransferase 3 (Gal3st3) from Mus musculus (Mouse).